A 227-amino-acid polypeptide reads, in one-letter code: PKHD-type hydroxylase Bxeno_B2194 (227 aa).

Residues lysine 78–serine 178 form the Fe2OG dioxygenase domain. Positions 96, 98, and 159 each coordinate Fe cation. 2-oxoglutarate is bound at residue arginine 169.

The cofactor is Fe(2+). L-ascorbate serves as cofactor.

This Paraburkholderia xenovorans (strain LB400) protein is PKHD-type hydroxylase Bxeno_B2194.